A 146-amino-acid polypeptide reads, in one-letter code: Anti-sigma F factor (146 aa).

The protein belongs to the anti-sigma-factor family.

The enzyme catalyses L-seryl-[protein] + ATP = O-phospho-L-seryl-[protein] + ADP + H(+). It carries out the reaction L-threonyl-[protein] + ATP = O-phospho-L-threonyl-[protein] + ADP + H(+). In terms of biological role, binds to sigma F and blocks its ability to form an RNA polymerase holoenzyme (E-sigma F). Phosphorylates SpoIIAA on a serine residue. This phosphorylation may enable SpoIIAA to act as an anti-anti-sigma factor that counteracts SpoIIAB and thus releases sigma F from inhibition. The sequence is that of Anti-sigma F factor from Bacillus cereus (strain G9842).